A 130-amino-acid polypeptide reads, in one-letter code: Small ribosomal subunit protein uS9 (130 aa).

The disordered stretch occupies residues 102–130 (GFLTRDPRMKERKKYGLKKARRSPQFSKR). A compositionally biased stretch (basic residues) spans 111–130 (KERKKYGLKKARRSPQFSKR).

Belongs to the universal ribosomal protein uS9 family.

The protein is Small ribosomal subunit protein uS9 of Clostridium botulinum (strain ATCC 19397 / Type A).